The following is a 331-amino-acid chain: L-lactate dehydrogenase A chain (331 aa).

NAD(+)-binding positions include Gly29–Lys57 and Arg98. Substrate contacts are provided by Arg105, Asn137, and Arg168. Residue Asn137 participates in NAD(+) binding. His192 functions as the Proton acceptor in the catalytic mechanism. Thr247 is a binding site for substrate.

Belongs to the LDH/MDH superfamily. LDH family. As to quaternary structure, homotetramer.

Its subcellular location is the cytoplasm. It catalyses the reaction (S)-lactate + NAD(+) = pyruvate + NADH + H(+). Its pathway is fermentation; pyruvate fermentation to lactate; (S)-lactate from pyruvate: step 1/1. Interconverts simultaneously and stereospecifically pyruvate and lactate with concomitant interconversion of NADH and NAD(+). This chain is L-lactate dehydrogenase A chain (ldha), found in Parachaenichthys charcoti (Charcot's dragonfish).